We begin with the raw amino-acid sequence, 568 residues long: Sentrin-specific protease 3 (568 aa).

A disordered region spans residues 1-119; the sequence is MKETIQGTGS…PSHRKTCSQR (119 aa). Residues Ser-52, Ser-71, and Ser-73 each carry the phosphoserine modification. Over residues 72 to 87 the composition is skewed to acidic residues; sequence ASEEEEEEEEEDEEEV. A compositionally biased stretch (basic residues) spans 106–119; that stretch reads RALRPSHRKTCSQR. 2 consecutive short sequence motifs (nuclear localization signal) follow at residues 119-122 and 147-153; these read RRRR and RHRGRRR. The interval 155 to 174 is disordered; sequence LAHPKNHLSPQEGGATPQVP. A Phosphoserine modification is found at Ser-163. At Thr-170 the chain carries Phosphothreonine. Phosphoserine is present on residues Ser-175, Ser-182, Ser-206, and Ser-226. The protease stretch occupies residues 380-537; it reads HVLTMDDLGT…AFVLQYCKHL (158 aa). Active-site residues include His-459 and Asp-476. Residue Cys-526 is the Nucleophile of the active site.

This sequence belongs to the peptidase C48 family. As to quaternary structure, component of some MLL1/MLL complex, at least composed of the core components KMT2A/MLL1, ASH2L, HCFC1/HCF1, WDR5 and RBBP5, as well as the facultative components BACC1, CHD8, E2F6, HSP70, INO80C, KANSL1, LAS1L, MAX, MCRS1, MGA, MYST1/MOF, PELP1, PHF20, PRP31, RING2, RUVB1/TIP49A, RUVB2/TIP49B, SENP3, TAF1, TAF4, TAF6, TAF7, TAF9 and TEX10. Interacts with EP300, NPM1 and CDCA8. Component of the 5FMC complex, at least composed of PELP1, LAS1L, TEX10, WDR18 and SENP3; the complex interacts with methylated CHTOP and ZNF148. Interacts with NOL9. Interacts with CCAR2.

The protein resides in the nucleus. It localises to the nucleolus. It is found in the nucleoplasm. Its subcellular location is the cytoplasm. Its activity is regulated as follows. On oxidative stress, SENP3 degradation is blocked by inhibition of its ubiquitination, which stabilizes it as it accumulates in the nucleoplasm. Its function is as follows. Protease that releases SUMO2 and SUMO3 monomers from sumoylated substrates, but has only weak activity against SUMO1 conjugates. Deconjugates SUMO2 from MEF2D, which increases its transcriptional activation capability. Deconjugates SUMO2 and SUMO3 from CDCA8. Redox sensor that, when redistributed into nucleoplasm, can act as an effector to enhance HIF1A transcriptional activity by desumoylating EP300. Required for rRNA processing through deconjugation of SUMO2 and SUMO3 from nucleophosmin, NPM1. Plays a role in the regulation of sumoylation status of ZNF148. Functions as a component of the Five Friends of Methylated CHTOP (5FMC) complex; the 5FMC complex is recruited to ZNF148 by methylated CHTOP, leading to desumoylation of ZNF148 and subsequent transactivation of ZNF148 target genes. Deconjugates SUMO2 from KAT5. Catalyzes desumoylation of MRE11. In Mus musculus (Mouse), this protein is Sentrin-specific protease 3 (Senp3).